Consider the following 359-residue polypeptide: MATH domain and coiled-coil domain-containing protein At2g42475 (359 aa).

In terms of domain architecture, MATH spans 6–128 (KTSFTFEIEN…NDKLIITVEV (123 aa)). Positions 146–337 (EFKELQDLYN…NLELMVLDFK (192 aa)) form a coiled coil.

The sequence is that of MATH domain and coiled-coil domain-containing protein At2g42475 from Arabidopsis thaliana (Mouse-ear cress).